The primary structure comprises 340 residues: Outer membrane protein B (340 aa).

Residues 1–26 form the signal peptide; it reads MSSKLVNSLRLTFLSFLGIVSTSLDA.

Belongs to the chlamydial OMP family.

It localises to the cell outer membrane. This Chlamydia muridarum (strain MoPn / Nigg) protein is Outer membrane protein B (ompB).